A 935-amino-acid polypeptide reads, in one-letter code: Progesterone receptor (935 aa).

An AF3; mediates transcriptional activation region spans residues 1–164 (MTELKAKGPR…PATQGVLSPL (164 aa)). Residues 1–254 (MTELKAKGPR…GGAAAGGGAA (254 aa)) form a disordered region. The interval 1-568 (MTELKAKGPR…YSFESLPQKI (568 aa)) is modulating, Pro-Rich. Position 20 is a phosphoserine (Ser-20). Residues 55 to 59 (LDGLL) carry the LXXL motif 1 motif. A Phosphoserine modification is found at Ser-81. The LXXL motif 2 motif lies at 115-119 (LDTLL). Ser-130 and Ser-162 each carry phosphoserine. The tract at residues 165–305 (MSRSGGKAGD…LATTVMDFIH (141 aa)) is mediates transcriptional transrepression. A Nuclear localization signal motif is present at residues 183–187 (KVLPR). A phosphoserine mark is found at Ser-190 and Ser-213. Residues 220–231 (EVEEEDGSESED) show a composition bias toward acidic residues. A compositionally biased stretch (low complexity) spans 232 to 246 (SAGPLLKGKPRALGG). Phosphoserine; by MAPK1 is present on Ser-294. The tract at residues 331-378 (GGAGAASAFAPPRSSPSASSTPVAVGDFPDCAYPPDAEPKDDAYPLYS) is disordered. The segment covering 335 to 350 (AASAFAPPRSSPSASS) has biased composition (low complexity). Phosphoserine; by MAPK is present on Ser-345. Lys-388 is covalently cross-linked (Glycyl lysine isopeptide (Lys-Gly) (interchain with G-Cter in SUMO); alternate). Residue Lys-388 forms a Glycyl lysine isopeptide (Lys-Gly) (interchain with G-Cter in ubiquitin); alternate linkage. Ser-400 bears the Phosphoserine; by CDK2 mark. Residues 418-430 (PLGPPPPLPPRAP) are compositionally biased toward pro residues. Positions 418–438 (PLGPPPPLPPRAPPTRAGEAA) are disordered. Residues 456–548 (STLECILYKA…VYPPYLNYLR (93 aa)) are AF1; mediates transcriptional activation. Lys-533 participates in a covalent cross-link: Glycyl lysine isopeptide (Lys-Gly) (interchain with G-Cter in SUMO). 2 consecutive NR C4-type zinc fingers follow at residues 569 to 589 (CLICGDEASGCHYGVLTCGSC) and 605 to 629 (CAGRNDCIVDKIRRKNCPACRLRKC). A DNA-binding region (nuclear receptor) is located at residues 569–641 (CLICGDEASG…AGMVLGGRKF (73 aa)). Ser-678 is modified (phosphoserine). The region spanning 681 to 915 (QDIQLIPPLI…EFPEMMSEVI (235 aa)) is the NR LBD domain. Residues 689-935 (LINLLMSIEP…MVKPLLFHKK (247 aa)) are AF2; mediates transcriptional activation.

This sequence belongs to the nuclear hormone receptor family. As to quaternary structure, interacts with SMARD1 and UNC45A. Interacts with CUEDC2; the interaction promotes ubiquitination, decreases sumoylation, and represses transcriptional activity. Interacts with PIAS3; the interaction promotes sumoylation of PR in a hormone-dependent manner, inhibits DNA-binding, and alters nuclear export. Interacts with SP1; the interaction requires ligand-induced phosphorylation on Ser-345 by ERK1/2-MAPK. Interacts with PRMT2. Interacts with NCOA2 and NCOA1. Interacts with KLF9. Interacts with GTF2B. Phosphorylated on multiple serine sites. Several of these sites are hormone-dependent. Phosphorylation on Ser-294 is highly hormone-dependent and modulates ubiquitination and sumoylation on Lys-388. Phosphorylation on Ser-102 and Ser-345 also requires induction by hormone. Basal phosphorylation on Ser-81, Ser-162, Ser-190 and Ser-400 is increased in response to progesterone and can be phosphorylated in vitro by the CDK2-A1 complex. Increased levels of phosphorylation on Ser-400 also in the presence of EGF, heregulin, IGF, PMA and FBS. Phosphorylation at this site by CDK2 is ligand-independent, and increases nuclear translocation and transcriptional activity. Phosphorylation at Ser-162 and Ser-294, but not at Ser-190, is impaired during the G(2)/M phase of the cell cycle. Phosphorylation on Ser-345 by ERK1/2 MAPK is required for interaction with SP1. Post-translationally, sumoylation is hormone-dependent and represses transcriptional activity. Sumoylation on all three sites is enhanced by PIAS3. Desumoylated by SENP1. Sumoylation on Lys-388, the main site of sumoylation, is repressed by ubiquitination on the same site, and modulated by phosphorylation at Ser-294. In terms of processing, ubiquitination is hormone-dependent and represses sumoylation on the same site. Promoted by MAPK-mediated phosphorylation on Ser-294. Palmitoylated by ZDHHC7 and ZDHHC21. Palmitoylation is required for plasma membrane targeting and for rapid intracellular signaling via ERK and AKT kinases and cAMP generation.

Its subcellular location is the nucleus. It localises to the cytoplasm. Its function is as follows. The steroid hormones and their receptors are involved in the regulation of eukaryotic gene expression and affect cellular proliferation and differentiation in target tissues. Transcriptional activator of several progesteron-dependent promoters in a variety of cell types. Involved in activation of SRC-dependent MAPK signaling on hormone stimulation. The sequence is that of Progesterone receptor (PGR) from Pongo pygmaeus (Bornean orangutan).